The primary structure comprises 1268 residues: SR-related and CTD-associated factor 8 (1268 aa).

Residues 1 to 139 (MEAVKTFNSE…PLLDMAAGIP (139 aa)) form the CID domain. Position 6 is a phosphothreonine (threonine 6). Residue lysine 18 forms a Glycyl lysine isopeptide (Lys-Gly) (interchain with G-Cter in SUMO1) linkage. Residues 270–283 (GEDSEHSEESKKEM) are compositionally biased toward basic and acidic residues. 3 disordered regions span residues 270-290 (GEDS…QLSH), 322-355 (QQQP…QQHF), and 385-469 (EIFE…PVRS). The residue at position 273 (serine 273) is a Phosphoserine. Residues 327–354 (KVTPQDSQEGTFGSEHSASPSQGSSQQH) show a composition bias toward polar residues. Residues 394-443 (VAVRSRSRTHSRSRSRSPRKRRSRSRSGSRKRKHRKRSRSHSREKKRKAS) are compositionally biased toward basic residues. A compositionally biased stretch (basic and acidic residues) spans 447–461 (SSERRAREREKERQK). Residues 477–551 (TTLWVGQVDK…KVIKIAWALN (75 aa)) enclose the RRM domain. Serine 617 carries the post-translational modification Phosphoserine. A disordered region spans residues 776 to 807 (QIPSGENTRPVIPSDIPSSAAMLAQPPGASST). An asymmetric dimethylarginine mark is found at arginine 915, arginine 925, and arginine 936. Disordered stretches follow at residues 984-1012 (PGRP…EGDR) and 1040-1065 (RLDP…PVDM). Position 1071 is an asymmetric dimethylarginine (arginine 1071). Residues 1199 to 1268 (ATSQRKGDNV…VVESTETEGT (70 aa)) form a disordered region. Over residues 1249-1262 (GTVAGVESEAVVES) the composition is skewed to low complexity.

In terms of assembly, interacts with POLR2A; via C-terminal heptapeptide repeat domain (CTD) phosphorylated at 'Ser-2' and 'Ser-5'. Identified in a complex with CDC5L and other spliceosomal proteins.

Its subcellular location is the nucleus. The protein resides in the nucleus matrix. Anti-terminator protein required to prevent early mRNA termination during transcription. Together with SCAF4, acts by suppressing the use of early, alternative poly(A) sites, thereby preventing the accumulation of non-functional truncated proteins. Mechanistically, associates with the phosphorylated C-terminal heptapeptide repeat domain (CTD) of the largest RNA polymerase II subunit (POLR2A), and subsequently binds nascent RNA upstream of early polyadenylation sites to prevent premature mRNA transcript cleavage and polyadenylation. Independently of SCAF4, also acts as a positive regulator of transcript elongation. The sequence is that of SR-related and CTD-associated factor 8 from Mus musculus (Mouse).